Consider the following 275-residue polypeptide: Large ribosomal subunit protein uL2c (275 aa).

A disordered region spans residues 28–53 (TPTKSLTHANHRARGRNHSGSITTRW).

This sequence belongs to the universal ribosomal protein uL2 family. As to quaternary structure, part of the 50S ribosomal subunit.

The protein resides in the plastid. The protein localises to the chloroplast. The protein is Large ribosomal subunit protein uL2c (rpl2) of Nephroselmis olivacea (Green alga).